A 249-amino-acid chain; its full sequence is MSQANKIYFEDRSIVTPGDLIAEGEFQVPWSPYYYKVNGKYYSAITGLITVKDGSIFEVIPLESSRYYPKVGDTIIGLVEDIEIYGWVIDIKSFYSAYLPASSLLGRPISPGEDVRRYLDVGDYVIAKIEAFDRTISPVLTVKGKGLGRIPLGTVMDIMPVKVPRVIGKNRSMIEVLTSESGCEIFVAQNGRIHIKCANNLIEEALIEAINIIQSESHTKGLTERIRNFLKQKLGVIRNDSAPKTEANT.

The S1 motif domain occupies 72–143 (GDTIIGLVED…RTISPVLTVK (72 aa)). The KH domain occupies 151 to 213 (PLGTVMDIMP…EALIEAINII (63 aa)).

The protein belongs to the RRP4 family. Component of the archaeal exosome complex. Forms a trimer of Rrp4 and/or Csl4 subunits. The trimer associates with a hexameric ring-like arrangement composed of 3 Rrp41-Rrp42 heterodimers.

Its subcellular location is the cytoplasm. Functionally, non-catalytic component of the exosome, which is a complex involved in RNA degradation. Increases the RNA binding and the efficiency of RNA degradation. Confers strong poly(A) specificity to the exosome. This chain is Exosome complex component Rrp4, found in Sulfolobus acidocaldarius (strain ATCC 33909 / DSM 639 / JCM 8929 / NBRC 15157 / NCIMB 11770).